Reading from the N-terminus, the 265-residue chain is Tryptophan synthase alpha chain (265 aa).

Active-site proton acceptor residues include glutamate 49 and glutamate 60.

The protein belongs to the TrpA family. In terms of assembly, tetramer of two alpha and two beta chains.

It carries out the reaction (1S,2R)-1-C-(indol-3-yl)glycerol 3-phosphate + L-serine = D-glyceraldehyde 3-phosphate + L-tryptophan + H2O. Its pathway is amino-acid biosynthesis; L-tryptophan biosynthesis; L-tryptophan from chorismate: step 5/5. The alpha subunit is responsible for the aldol cleavage of indoleglycerol phosphate to indole and glyceraldehyde 3-phosphate. The sequence is that of Tryptophan synthase alpha chain from Janthinobacterium sp. (strain Marseille) (Minibacterium massiliensis).